Here is a 1107-residue protein sequence, read N- to C-terminus: Probable chromatin-remodeling complex ATPase chain (1107 aa).

Disordered stretches follow at residues 1 to 124 (MAKP…KREK) and 177 to 217 (GNQS…GSGG). Composition is skewed to acidic residues over residues 8-25 (DEEE…EEQS), 33-43 (GEEEDEEEEEA), 53-65 (GGEE…EEIE), and 89-114 (EGDE…DEAE). Residues 121-147 (KREKARLKEMQKLKKQKIQEILDTQNA) are a coiled coil. Residues 183-193 (KKPRGRGRHAS) are compositionally biased toward basic residues. Acidic residues predominate over residues 197–211 (EEEEDEEYLKEEEDA). One can recognise a Helicase ATP-binding domain in the interval 243 to 408 (IRLYENGING…WSLLNFLLPE (166 aa)). 256 to 263 (DEMGLGKT) lines the ATP pocket. The short motif at 359–362 (DEAH) is the DEAH box element. In terms of domain architecture, Helicase C-terminal spans 536–687 (LLDKLLPKLK…ALVIQQGRLA (152 aa)). SANT domains lie at 877-929 (EGFA…ERYK) and 978-1039 (QNKG…DTLI). The stretch at 1029 to 1067 (QELARRCDTLIRLVEKENQEYDEQERQARKDKRMAKNMT) forms a coiled coil. Residues 1049-1107 (YDEQERQARKDKRMAKNMTPTKRSALRVSEGETTPSNSFKRRRQSLMDDYVGSGRRKRG) form a disordered region.

It belongs to the SNF2/RAD54 helicase family. ISWI subfamily.

Its subcellular location is the nucleus. Possesses intrinsic ATP-dependent nucleosome-remodeling activity. Constitutes the catalytic subunit of several complexes capable of forming ordered nucleosome arrays on chromatin in vitro. This is Probable chromatin-remodeling complex ATPase chain from Oryza sativa subsp. japonica (Rice).